Reading from the N-terminus, the 473-residue chain is Photosystem II CP43 reaction center protein (473 aa).

The propeptide occupies 1–14 (MKTLYSLRRFYHVE). Position 15 is an N-acetylthreonine (threonine 15). Threonine 15 is subject to Phosphothreonine. Helical transmembrane passes span 69-93 (LFEVAHFVPEKPMYEQGLILLPHLA), 134-155 (LLGPETLEESFPFFGYVWKDRN), 178-200 (KALYFGGVYDTWAPGGGDVRKIT), 255-275 (KPFAWARRAFVWSGEAYLSYS), and 291-312 (WFNNTAYPSEFYGPTGPEASQA). Glutamate 367 is a binding site for [CaMn4O5] cluster. Residues 447–471 (RARAAAAGFEKGIDRDFEPVLSMTP) form a helical membrane-spanning segment.

This sequence belongs to the PsbB/PsbC family. PsbC subfamily. PSII is composed of 1 copy each of membrane proteins PsbA, PsbB, PsbC, PsbD, PsbE, PsbF, PsbH, PsbI, PsbJ, PsbK, PsbL, PsbM, PsbT, PsbX, PsbY, PsbZ, Psb30/Ycf12, at least 3 peripheral proteins of the oxygen-evolving complex and a large number of cofactors. It forms dimeric complexes. Binds multiple chlorophylls and provides some of the ligands for the Ca-4Mn-5O cluster of the oxygen-evolving complex. It may also provide a ligand for a Cl- that is required for oxygen evolution. PSII binds additional chlorophylls, carotenoids and specific lipids. is required as a cofactor.

It is found in the plastid. The protein localises to the chloroplast thylakoid membrane. Its function is as follows. One of the components of the core complex of photosystem II (PSII). It binds chlorophyll and helps catalyze the primary light-induced photochemical processes of PSII. PSII is a light-driven water:plastoquinone oxidoreductase, using light energy to abstract electrons from H(2)O, generating O(2) and a proton gradient subsequently used for ATP formation. This chain is Photosystem II CP43 reaction center protein, found in Chloranthus spicatus (Chulantree).